A 365-amino-acid polypeptide reads, in one-letter code: Forkhead box protein E4 (365 aa).

Positions 1 to 13 (MDSPDSVRVKCES) are enriched in basic and acidic residues. Residues 1-46 (MDSPDSVRVKCESKGSCSPEEGLNNGLPEEHNQASGGRRRKRPVQR) are disordered. A DNA-binding region (fork-head) is located at residues 48–142 (KPPYSYIALI…DNGSFLRRRK (95 aa)).

First expressed at the end of gastrulation (stage 13) in the anterior ectodermal placode. During intermediate neural plate stages (stages 14-16), expression expands to the presumptive nasal ectoderm (PNE) and the presumptive lens ectoderm (PLE). By stages 18-21, expression begins to deplete in the PNE, while intensifying in the PLE so that by late neural stages (stages 22), expression is restricted to the PLE. Throughout tailbud stages (stage 23-31), expression is maintained in the lens placode and lens vesicle. In the maturing lens (stage 32-onwards), expression is restricted to the anterior lens epithelium, where it remains during the tadpole stage. In tadpoles there is additional expression in the ventral midline of the pharynx. Expression continues in the adult eye.

The protein resides in the nucleus. In terms of biological role, probable transcription factor. Mediates lens formation in the embryo by promoting the proliferation of the specified lens ectoderm and suppressing its terminal differentiation. The sequence is that of Forkhead box protein E4 from Xenopus laevis (African clawed frog).